The chain runs to 473 residues: Psoralen synthase (473 aa).

A helical transmembrane segment spans residues 1 to 17; it reads YFFPLFLVTIFLYKWLV. Residues 350–355 form a substrate specificity region; sequence TAPLLV. Cys425 serves as a coordination point for heme.

The protein belongs to the cytochrome P450 family. The cofactor is heme.

Its subcellular location is the microsome membrane. The enzyme catalyses (7S)-marmesin + reduced [NADPH--hemoprotein reductase] + O2 = psoralen + acetone + oxidized [NADPH--hemoprotein reductase] + 2 H2O + H(+). It participates in secondary metabolite biosynthesis. In terms of biological role, involved in the biosynthesis of coumarins and furanocoumarins (FCs), natural products required for defense responses against attacks by predators with potential medical and agroindustrial usages such as anticoagulant, rodenticide and artificial vanilla substitutes. Involved in linear furanocumarin (psoralen) biosynthesis. Converts marmesin to psoralen and, with much lower affinity, 5-hydroxymarmesin to bergaptol. In Pastinaca sativa (Wild parsnip), this protein is Psoralen synthase.